The chain runs to 217 residues: Octanoyltransferase (217 aa).

The BPL/LPL catalytic domain occupies 35–214 (DEAGERIWLL…TLPAFLDKLR (180 aa)). Substrate-binding positions include 73–80 (RGGRYTYH), 145–147 (AIG), and 158–160 (GFS). Cysteine 176 functions as the Acyl-thioester intermediate in the catalytic mechanism.

Belongs to the LipB family.

It localises to the cytoplasm. The enzyme catalyses octanoyl-[ACP] + L-lysyl-[protein] = N(6)-octanoyl-L-lysyl-[protein] + holo-[ACP] + H(+). It functions in the pathway protein modification; protein lipoylation via endogenous pathway; protein N(6)-(lipoyl)lysine from octanoyl-[acyl-carrier-protein]: step 1/2. Its function is as follows. Catalyzes the transfer of endogenously produced octanoic acid from octanoyl-acyl-carrier-protein onto the lipoyl domains of lipoate-dependent enzymes. Lipoyl-ACP can also act as a substrate although octanoyl-ACP is likely to be the physiological substrate. This Sphingopyxis alaskensis (strain DSM 13593 / LMG 18877 / RB2256) (Sphingomonas alaskensis) protein is Octanoyltransferase.